Here is a 120-residue protein sequence, read N- to C-terminus: Lysozyme (120 aa).

The C-type lysozyme domain occupies lysine 1–cysteine 120. Cystine bridges form between cysteine 6–cysteine 120, cysteine 27–cysteine 110, cysteine 62–cysteine 76, and cysteine 72–cysteine 90. Catalysis depends on residues glutamate 32 and aspartate 50.

This sequence belongs to the glycosyl hydrolase 22 family. Monomer.

The catalysed reaction is Hydrolysis of (1-&gt;4)-beta-linkages between N-acetylmuramic acid and N-acetyl-D-glucosamine residues in a peptidoglycan and between N-acetyl-D-glucosamine residues in chitodextrins.. Functionally, lysozymes have primarily a bacteriolytic function; those in tissues and body fluids are associated with the monocyte-macrophage system and enhance the activity of immunoagents. The chain is Lysozyme from Antheraea mylitta (Tasar silkworm).